A 380-amino-acid chain; its full sequence is Cytochrome b (380 aa).

4 helical membrane-spanning segments follow: residues 34–54, 78–99, 114–134, and 179–199; these read FGSL…LLAM, WLIR…YFHI, WNTG…GYVL, and FFAL…IHLT. The heme b site is built by H84 and H98. The heme b site is built by H183 and H197. H202 is an a ubiquinone binding site. 4 helical membrane-spanning segments follow: residues 227–247, 289–309, 321–341, and 348–368; these read LKDI…ALFS, LGGV…PFLH, LSQL…WVGS, and FIII…VLFP.

Belongs to the cytochrome b family. The cytochrome bc1 complex contains 11 subunits: 3 respiratory subunits (MT-CYB, CYC1 and UQCRFS1), 2 core proteins (UQCRC1 and UQCRC2) and 6 low-molecular weight proteins (UQCRH/QCR6, UQCRB/QCR7, UQCRQ/QCR8, UQCR10/QCR9, UQCR11/QCR10 and a cleavage product of UQCRFS1). This cytochrome bc1 complex then forms a dimer. Heme b serves as cofactor.

Its subcellular location is the mitochondrion inner membrane. In terms of biological role, component of the ubiquinol-cytochrome c reductase complex (complex III or cytochrome b-c1 complex) that is part of the mitochondrial respiratory chain. The b-c1 complex mediates electron transfer from ubiquinol to cytochrome c. Contributes to the generation of a proton gradient across the mitochondrial membrane that is then used for ATP synthesis. The sequence is that of Cytochrome b (MT-CYB) from Halobaena caerulea (Blue petrel).